The chain runs to 344 residues: [LysW]-L-2-aminoadipate 6-phosphate reductase (344 aa).

Residues 12–15 (SGYA), 36–38 (SRR), and leucine 75 contribute to the NADP(+) site. Cysteine 148 is an active-site residue. Serine 180, alanine 184, and asparagine 312 together coordinate NADP(+).

It belongs to the NAGSA dehydrogenase family. Type 1 subfamily. LysY sub-subfamily. Homotetramer. Interacts with LysW. May form a ternary complex with LysW and LysZ.

The protein resides in the cytoplasm. It catalyses the reaction [amino-group carrier protein]-C-terminal-N-(1-carboxy-5-oxopentan-1-yl)-L-glutamine + phosphate + NADP(+) = [amino-group carrier protein]-C-terminal-N-(1-carboxy-5-phosphooxy-5-oxopentan-1-yl)-L-glutamine + NADPH + H(+). It functions in the pathway amino-acid biosynthesis; L-lysine biosynthesis via AAA pathway; L-lysine from L-alpha-aminoadipate (Thermus route): step 3/5. Its function is as follows. Catalyzes the NADPH-dependent reduction of [LysW]-aminoadipate 6-phosphate to yield [LysW]-aminoadipate 6-semialdehyde. This is [LysW]-L-2-aminoadipate 6-phosphate reductase from Thermus thermophilus (strain ATCC BAA-163 / DSM 7039 / HB27).